The following is a 274-amino-acid chain: Nitrogenase iron protein (274 aa).

8–15 (GKGGIGKS) is a binding site for ATP. Cys-94 serves as a coordination point for [4Fe-4S] cluster. Residue Arg-97 is modified to ADP-ribosylarginine; by dinitrogenase reductase ADP-ribosyltransferase. A [4Fe-4S] cluster-binding site is contributed by Cys-131.

This sequence belongs to the NifH/BchL/ChlL family. Homodimer. [4Fe-4S] cluster serves as cofactor. In terms of processing, the reversible ADP-ribosylation of Arg-97 inactivates the nitrogenase reductase and regulates nitrogenase activity.

It catalyses the reaction N2 + 8 reduced [2Fe-2S]-[ferredoxin] + 16 ATP + 16 H2O = H2 + 8 oxidized [2Fe-2S]-[ferredoxin] + 2 NH4(+) + 16 ADP + 16 phosphate + 6 H(+). Functionally, the key enzymatic reactions in nitrogen fixation are catalyzed by the nitrogenase complex, which has 2 components: the iron protein and the molybdenum-iron protein. This is Nitrogenase iron protein from Chlorobium limicola (strain DSM 245 / NBRC 103803 / 6330).